The sequence spans 208 residues: Imidazoleglycerol-phosphate dehydratase (208 aa).

The protein belongs to the imidazoleglycerol-phosphate dehydratase family.

It localises to the cytoplasm. The catalysed reaction is D-erythro-1-(imidazol-4-yl)glycerol 3-phosphate = 3-(imidazol-4-yl)-2-oxopropyl phosphate + H2O. The protein operates within amino-acid biosynthesis; L-histidine biosynthesis; L-histidine from 5-phospho-alpha-D-ribose 1-diphosphate: step 6/9. The protein is Imidazoleglycerol-phosphate dehydratase of Paenarthrobacter aurescens (strain TC1).